The primary structure comprises 737 residues: Photosystem I P700 chlorophyll a apoprotein A2 (737 aa).

8 helical membrane passes run 46–69 (LFST…FHIA), 135–158 (LYQG…LHLQ), 175–199 (LNHH…HVAI), 273–291 (IAHH…GHMY), 333–356 (LHFQ…QHMY), 372–398 (AALY…IFFI), 420–442 (AIIS…LYVH), and 520–538 (FLVH…LILV). Residues C562 and C571 each contribute to the [4Fe-4S] cluster site. Transmembrane regions (helical) follow at residues 578–599 (AFYL…YWHW) and 646–668 (LAVW…MFLI). Chlorophyll a contacts are provided by H657, M665, and Y673. W674 is a phylloquinone binding site. Residues 710–730 (VVGLAHFTVGYVLTYAAFLIA) form a helical membrane-spanning segment.

This sequence belongs to the PsaA/PsaB family. The PsaA/B heterodimer binds the P700 chlorophyll special pair and subsequent electron acceptors. PSI consists of a core antenna complex that captures photons, and an electron transfer chain that converts photonic excitation into a charge separation. The cyanobacterial PSI reaction center is composed of one copy each of PsaA,B,C,D,E,F,I,J,K,L,M and X, and forms trimeric complexes. PSI electron transfer chain: 5 chlorophyll a, 1 chlorophyll a', 2 phylloquinones and 3 4Fe-4S clusters. PSI core antenna: 90 chlorophyll a, 22 carotenoids, 3 phospholipids and 1 galactolipid. P700 is a chlorophyll a/chlorophyll a' dimer, A0 is one or more chlorophyll a, A1 is one or both phylloquinones and FX is a shared 4Fe-4S iron-sulfur center. serves as cofactor.

Its subcellular location is the cellular thylakoid membrane. The enzyme catalyses reduced [plastocyanin] + hnu + oxidized [2Fe-2S]-[ferredoxin] = oxidized [plastocyanin] + reduced [2Fe-2S]-[ferredoxin]. PsaA and PsaB bind P700, the primary electron donor of photosystem I (PSI), as well as the electron acceptors A0, A1 and FX. PSI is a plastocyanin/cytochrome c6-ferredoxin oxidoreductase, converting photonic excitation into a charge separation, which transfers an electron from the donor P700 chlorophyll pair to the spectroscopically characterized acceptors A0, A1, FX, FA and FB in turn. Oxidized P700 is reduced on the lumenal side of the thylakoid membrane by plastocyanin or cytochrome c6. This is Photosystem I P700 chlorophyll a apoprotein A2 from Synechococcus sp. (strain CC9605).